The chain runs to 209 residues: Thymidylate kinase (209 aa).

Position 10–17 (10–17 (GIDGCGKS)) interacts with ATP.

This sequence belongs to the thymidylate kinase family.

It catalyses the reaction dTMP + ATP = dTDP + ADP. Functionally, phosphorylation of dTMP to form dTDP in both de novo and salvage pathways of dTTP synthesis. The protein is Thymidylate kinase of Parasynechococcus marenigrum (strain WH8102).